Reading from the N-terminus, the 229-residue chain is ATP synthase subunit a (229 aa).

Helical transmembrane passes span Y16–A36, Y81–I101, N110–V130, F142–I162, V175–P195, and I196–L216.

This sequence belongs to the ATPase A chain family. In terms of assembly, F-type ATPases have 2 components, CF(1) - the catalytic core - and CF(0) - the membrane proton channel. CF(1) has five subunits: alpha(3), beta(3), gamma(1), delta(1), epsilon(1). CF(0) has three main subunits: a(1), b(2) and c(9-12). The alpha and beta chains form an alternating ring which encloses part of the gamma chain. CF(1) is attached to CF(0) by a central stalk formed by the gamma and epsilon chains, while a peripheral stalk is formed by the delta and b chains.

It localises to the cell inner membrane. Its function is as follows. Key component of the proton channel; it plays a direct role in the translocation of protons across the membrane. The polypeptide is ATP synthase subunit a (Bdellovibrio bacteriovorus (strain ATCC 15356 / DSM 50701 / NCIMB 9529 / HD100)).